A 721-amino-acid polypeptide reads, in one-letter code: Mitogen-activated protein kinase 6 (721 aa).

Met-1 is covalently cross-linked (Peptide (Met-Gly) (interchain with G-Cter in ubiquitin)). Residues 20–316 (YMDLKPLGCG…AEEALSHPYM (297 aa)) enclose the Protein kinase domain. ATP-binding positions include 26 to 34 (LGCGGNGLV) and Lys-49. Residue Asp-152 is the Proton acceptor of the active site. Position 189 is a phosphoserine; by PAK1, PAK2 and PAK3 (Ser-189). The SEG motif motif lies at 189–191 (SEG). The short motif at 332-337 (FHIEDE) is the FRIEDE motif element. Ser-386, Ser-452, Ser-556, Ser-558, Ser-665, and Ser-684 each carry phosphoserine. Positions 701–715 (AMKSSPQIPHQTYSS) are enriched in polar residues. The tract at residues 701 to 721 (AMKSSPQIPHQTYSSILKHLN) is disordered.

It belongs to the protein kinase superfamily. CMGC Ser/Thr protein kinase family. MAP kinase subfamily. Heterodimer with ERK4/MAPK4. Interacts with (via FRIEDE motif) MAPKAPK5. Interacts with UBE3A; this interaction may be indirect and mediated by HERC2, possibly via HERC2 interaction with NEURL4. Requires Mg(2+) as cofactor. Phosphorylated at Ser-189 by PAK1, PAK2 and PAK3 resulting in catalytic activation. Phosphorylated by MAPKAPK5 at other sites. In terms of processing, ubiquitination at Met-1 leads to degradation by the proteasome pathway. As to expression, highest expression in the skeletal muscle, followed by the brain. Also found in heart, placenta, lung, liver, pancreas, kidney and skin fibroblasts.

It localises to the cytoplasm. Its subcellular location is the nucleus. The catalysed reaction is L-seryl-[protein] + ATP = O-phospho-L-seryl-[protein] + ADP + H(+). It catalyses the reaction L-threonyl-[protein] + ATP = O-phospho-L-threonyl-[protein] + ADP + H(+). With respect to regulation, activated by phosphorylation at Ser-189. Its function is as follows. Atypical MAPK protein. Phosphorylates microtubule-associated protein 2 (MAP2) and MAPKAPK5. The precise role of the complex formed with MAPKAPK5 is still unclear, but the complex follows a complex set of phosphorylation events: upon interaction with atypical MAPKAPK5, ERK3/MAPK6 is phosphorylated at Ser-189 and then mediates phosphorylation and activation of MAPKAPK5, which in turn phosphorylates ERK3/MAPK6. May promote entry in the cell cycle. The chain is Mitogen-activated protein kinase 6 (MAPK6) from Homo sapiens (Human).